Reading from the N-terminus, the 390-residue chain is 3-ketoacyl-CoA thiolase (390 aa).

Cys95 serves as the catalytic Acyl-thioester intermediate. Residues His346 and Cys376 each act as proton acceptor in the active site.

It belongs to the thiolase-like superfamily. Thiolase family. In terms of assembly, heterotetramer of two alpha chains (FadB) and two beta chains (FadA).

It is found in the cytoplasm. It catalyses the reaction an acyl-CoA + acetyl-CoA = a 3-oxoacyl-CoA + CoA. Its pathway is lipid metabolism; fatty acid beta-oxidation. Catalyzes the final step of fatty acid oxidation in which acetyl-CoA is released and the CoA ester of a fatty acid two carbons shorter is formed. The polypeptide is 3-ketoacyl-CoA thiolase (Psychrobacter sp. (strain PRwf-1)).